Reading from the N-terminus, the 351-residue chain is Histidine protein kinase SaeS (351 aa).

The next 2 helical transmembrane spans lie at 9–29 and 40–60; these read IIIG…IAYI and TLTL…SIFI. The HAMP domain occupies 61 to 114; that stretch reads NPLIQKIKQFNIKTKQFANGNYASNDKTFNSPKEIYELNQSFNKMASEITQQMN. The Histidine kinase domain occupies 129 to 348; it reads NLAHDLKTPL…TMTVTLHKLD (220 aa). His132 is subject to Phosphohistidine; by autocatalysis.

Autophosphorylated.

It is found in the cell membrane. It catalyses the reaction ATP + protein L-histidine = ADP + protein N-phospho-L-histidine.. Functionally, member of the two-component regulatory system SaeR/SaeS involved in the regulation of staphylococcal virulence factors in a strain-dependent fashion. Probably functions as a membrane-associated protein kinase that upon sensing the appropriate signal, autophosphorylates and in turn activates the cytosolic response regulator SaeR. The sequence is that of Histidine protein kinase SaeS (saeS) from Staphylococcus aureus (strain MRSA252).